The chain runs to 493 residues: L-arabinose isomerase 1 (493 aa).

Positions 301, 326, 343, and 442 each coordinate Mn(2+).

This sequence belongs to the arabinose isomerase family. Requires Mn(2+) as cofactor.

The catalysed reaction is beta-L-arabinopyranose = L-ribulose. The protein operates within carbohydrate degradation; L-arabinose degradation via L-ribulose; D-xylulose 5-phosphate from L-arabinose (bacterial route): step 1/3. In terms of biological role, catalyzes the conversion of L-arabinose to L-ribulose. The polypeptide is L-arabinose isomerase 1 (Bacillus licheniformis (strain ATCC 14580 / DSM 13 / JCM 2505 / CCUG 7422 / NBRC 12200 / NCIMB 9375 / NCTC 10341 / NRRL NRS-1264 / Gibson 46)).